Here is a 410-residue protein sequence, read N- to C-terminus: FBD-associated F-box protein At5g38590 (410 aa).

One can recognise an F-box domain in the interval 1–47 (MDKINGLPDDLLVKILSYVPTDIAVSTSILSKRWEFLWMWLPNLDYT). The FBD domain maps to 335-385 (GWNQPSSVPECLLSSLQIFKWPQYLGRPEDRDIAVYILKNARHLKKTTILA).

The polypeptide is FBD-associated F-box protein At5g38590 (Arabidopsis thaliana (Mouse-ear cress)).